A 305-amino-acid polypeptide reads, in one-letter code: Glycine--tRNA ligase alpha subunit (305 aa).

Belongs to the class-II aminoacyl-tRNA synthetase family. As to quaternary structure, tetramer of two alpha and two beta subunits.

The protein localises to the cytoplasm. The catalysed reaction is tRNA(Gly) + glycine + ATP = glycyl-tRNA(Gly) + AMP + diphosphate. This Vibrio parahaemolyticus serotype O3:K6 (strain RIMD 2210633) protein is Glycine--tRNA ligase alpha subunit.